Here is a 101-residue protein sequence, read N- to C-terminus: MAKKSIVNRNLKRLKTVNKYAARRAEIVSILRDAGSDIEAKASARDLLQKLPRNASPVRLRQRCALTGRPRGVFSKFGLGRIKLREIAMRGEIPGLIKASW.

The protein belongs to the universal ribosomal protein uS14 family. In terms of assembly, part of the 30S ribosomal subunit. Contacts proteins S3 and S10.

In terms of biological role, binds 16S rRNA, required for the assembly of 30S particles and may also be responsible for determining the conformation of the 16S rRNA at the A site. This chain is Small ribosomal subunit protein uS14, found in Nitrosomonas europaea (strain ATCC 19718 / CIP 103999 / KCTC 2705 / NBRC 14298).